An 89-amino-acid polypeptide reads, in one-letter code: Translation initiation factor IF-1, chloroplastic (89 aa).

The S1-like domain occupies Met-1–Arg-72.

It belongs to the IF-1 family. Component of the 30S ribosomal translation pre-initiation complex which assembles on the 30S ribosome in the order IF-2 and IF-3, IF-1 and N-formylmethionyl-tRNA(fMet); mRNA recruitment can occur at any time during PIC assembly.

The protein resides in the plastid. It localises to the chloroplast. Its function is as follows. One of the essential components for the initiation of protein synthesis. Stabilizes the binding of IF-2 and IF-3 on the 30S subunit to which N-formylmethionyl-tRNA(fMet) subsequently binds. Helps modulate mRNA selection, yielding the 30S pre-initiation complex (PIC). Upon addition of the 50S ribosomal subunit IF-1, IF-2 and IF-3 are released leaving the mature 70S translation initiation complex. The chain is Translation initiation factor IF-1, chloroplastic from Angiopteris evecta (Mule's foot fern).